Consider the following 399-residue polypeptide: A-type ATP synthase subunit C (399 aa).

Belongs to the V-ATPase V0D/AC39 subunit family. As to quaternary structure, the A-type ATPase is composed of subunits A(3), B(3), C, D, E(1 or 2), F, H(2), I and K(x).

The protein localises to the cell membrane. In terms of biological role, component of the A-type ATP synthase that produces ATP from ADP in the presence of a proton gradient across the membrane. The polypeptide is A-type ATP synthase subunit C (Methanocaldococcus jannaschii (strain ATCC 43067 / DSM 2661 / JAL-1 / JCM 10045 / NBRC 100440) (Methanococcus jannaschii)).